The chain runs to 359 residues: Fc receptor-like A (359 aa).

The first 27 residues, 1–27, serve as a signal peptide directing secretion; the sequence is MKLGCVLMAWALYLSLGVLWVAQMLLA. Ig-like C2-type domains are found at residues 70–159 and 170–257; these read PFHL…ETAS and PAPI…PQLE. Intrachain disulfides connect cysteine 99–cysteine 143 and cysteine 192–cysteine 240. A disordered region spans residues 259-313; sequence RVQGASSSAAPPTLNPAPQKSAAPGTAPEEAPGPLPPPPTPSSEDPGFSSPLGMP. Positions 279–288 are enriched in low complexity; the sequence is SAAPGTAPEE. The segment covering 289–299 has biased composition (pro residues); sequence APGPLPPPPTP.

In terms of assembly, monomer or homodimer; disulfide-linked. In terms of tissue distribution, expressed specifically in primary and secondary lymphoid tissues like lymph node, spleen and tonsil. Specifically expressed in B-cells with a high level in normal germinal center B-cells, centroblasts and in a subset of diffuse large B-cell lymphomas. Highly expressed in bone marrow B-cells and weakly in earlier B lineage cells. Expressed in pre-germinal and germinal center B-cells in secondary lymphoid tissues. Also expressed in melanoma and melanocytes.

The protein localises to the cytoplasm. Its function is as follows. May be implicated in B-cell differentiation and lymphomagenesis. The chain is Fc receptor-like A (FCRLA) from Homo sapiens (Human).